The sequence spans 96 residues: Glutamyl-tRNA(Gln) amidotransferase subunit C (96 aa).

Belongs to the GatC family. In terms of assembly, heterotrimer of A, B and C subunits.

The catalysed reaction is L-glutamyl-tRNA(Gln) + L-glutamine + ATP + H2O = L-glutaminyl-tRNA(Gln) + L-glutamate + ADP + phosphate + H(+). It catalyses the reaction L-aspartyl-tRNA(Asn) + L-glutamine + ATP + H2O = L-asparaginyl-tRNA(Asn) + L-glutamate + ADP + phosphate + 2 H(+). Functionally, allows the formation of correctly charged Asn-tRNA(Asn) or Gln-tRNA(Gln) through the transamidation of misacylated Asp-tRNA(Asn) or Glu-tRNA(Gln) in organisms which lack either or both of asparaginyl-tRNA or glutaminyl-tRNA synthetases. The reaction takes place in the presence of glutamine and ATP through an activated phospho-Asp-tRNA(Asn) or phospho-Glu-tRNA(Gln). In Neisseria meningitidis serogroup A / serotype 4A (strain DSM 15465 / Z2491), this protein is Glutamyl-tRNA(Gln) amidotransferase subunit C.